The sequence spans 451 residues: Tubulin gamma-1 chain (451 aa).

Position 131 is a phosphoserine; by BRSK1 (Ser131). GTP is bound at residue Ala142 to Gly148.

Belongs to the tubulin family. As to quaternary structure, component of the gamma-tubulin ring complex (gTuRC) consisting of TUBGCP2, TUBGCP3, TUBGCP4, TUBGCP5 and TUBGCP6 and gamma-tubulin TUBG1 or TUBG2. TUBGCP2, TUBGCP3, TUBGCP4, TUBGCP5 and TUBGCP6 assemble in a 5:5:2:1:1 stoichiometry; each is associated with a gamma-tubulin, thereby arranging 14 gamma-tubulins in a helical manner. Gamma-tubulin at the first position is blocked by TUBGCP3 at the last position, allowing 13 protafilaments to grow into a microtubule. The gTuRC (via TUBGCP3 and TUBGCP6) interacts with ACTB and MZT1; the interactions form a luminal bridge that stabilizes the initial structure during complex assembly. The gTuRC (via TUBGCP2) interacts with MZT2A/MZT2B and CDK5RAP2 (via CM1 motif); the interactions play a role in gTuRC activation. Interacts with alpha-beta tubulin heterodimers; the interaction allows microtubules to nucleate from the gTuRC. Interacts with B9D2. Interacts with CDK5RAP2; the interaction is leading to centrosomal localization of TUBG1 and CDK5RAP2. Interacts with CIMAP3. Interacts with SAS6 and NUP62 at the centrosome. Interacts with EML3 (phosphorylated at 'Thr-881') and HAUS8. Interacts with DNM2; this interaction may participate in centrosome cohesion. Interacts with CCDC66. In terms of processing, phosphorylation at Ser-131 by BRSK1 regulates centrosome duplication, possibly by mediating relocation of gamma-tubulin and its associated proteins from the cytoplasm to the centrosome.

Its subcellular location is the cytoplasm. The protein resides in the cytoskeleton. It localises to the microtubule organizing center. It is found in the centrosome. The protein localises to the spindle. Functionally, tubulin is the major constituent of microtubules, protein filaments consisting of alpha- and beta-tubulin heterodimers. Gamma-tubulin is a key component of the gamma-tubulin ring complex (gTuRC) which mediates microtubule nucleation. The gTuRC regulates the minus-end nucleation of alpha-beta tubulin heterodimers that grow into microtubule protafilaments, a critical step in centrosome duplication and spindle formation. In Bos taurus (Bovine), this protein is Tubulin gamma-1 chain.